The following is a 355-amino-acid chain: Small ribosomal subunit protein uS2 (355 aa).

The protein belongs to the universal ribosomal protein uS2 family.

The protein is Small ribosomal subunit protein uS2 of Methylorubrum extorquens (strain CM4 / NCIMB 13688) (Methylobacterium extorquens).